A 258-amino-acid chain; its full sequence is UPF0246 protein ETA_07010 (258 aa).

The protein belongs to the UPF0246 family.

This is UPF0246 protein ETA_07010 from Erwinia tasmaniensis (strain DSM 17950 / CFBP 7177 / CIP 109463 / NCPPB 4357 / Et1/99).